We begin with the raw amino-acid sequence, 923 residues long: SPX and EXS domain-containing protein 1 (923 aa).

Positions 1–326 constitute an SPX domain; it reads MKFGKKLRFE…PMNSSIKLDQ (326 aa). Composition is skewed to low complexity over residues 94–147 and 186–195; these read QEQS…QQQQ and TTTTTTTTTT. Disordered regions lie at residues 94–150 and 185–208; these read QEQS…QDLK and PTTTTTTTTTTMNTSAGSGIFKNK. Transmembrane regions (helical) follow at residues 382 to 402, 416 to 436, 471 to 491, 499 to 519, 529 to 551, 591 to 611, 620 to 640, 655 to 675, and 700 to 720; these read LKLGFAIGLSIGILAFVIILF, FVSTIPIFRAVGIPILAVWLW, ASFLTAIWLTMFLLFCGTVTG, PAQVYPLVLVIFFLSVVFFPF, LLFITLGNVIITPFGSTKFRALF, SIALPILSGLPLLWRFMQCIL, IHLGNSTKYAVGFSVVLFSAL, ILWCVCFVLSTLYMYCWDVVV, and WSYYYVLFSNLILRFAWTLTI. In terms of domain architecture, EXS spans 585-785; sequence RCNQVNSIAL…KNEVPKVESP (201 aa). Residues 793–871 form a disordered region; that stretch reads SSYPYRQDNF…NNSPSGSNSS (79 aa).

It belongs to the SYG1 (TC 2.A.94) family.

The protein localises to the membrane. This chain is SPX and EXS domain-containing protein 1, found in Dictyostelium discoideum (Social amoeba).